Reading from the N-terminus, the 250-residue chain is Protein KPLCE (250 aa).

As to expression, skin-specific.

The chain is Protein KPLCE from Homo sapiens (Human).